The chain runs to 397 residues: Glycine betaine/carnitine transport ATP-binding protein GbuA (397 aa).

The ABC transporter domain maps to Lys28 to Ile264. Gly60 to Ser67 is a binding site for ATP. CBS domains follow at residues Met279 to Ser335 and Leu340 to Val395.

The protein belongs to the ABC transporter superfamily. In terms of assembly, the complex is composed of two ATP-binding proteins (GbuA), two transmembrane proteins (GbuB) and a solute-binding protein (GbuC).

The enzyme catalyses a quaternary ammonium(out) + ATP + H2O = a quaternary ammonium(in) + ADP + phosphate + H(+). Its activity is regulated as follows. The complex is activated by an osmotic gradient or by low temperature. Part of the ABC transporter complex GbuABC involved in glycine betaine uptake. Responsible for energy coupling to the transport system. Involved, with BetL and OpuC, in osmoprotection and cryoprotection of Listeria. Can also uptake carnitine when carnitine is abundant in the growth medium. This chain is Glycine betaine/carnitine transport ATP-binding protein GbuA (gbuA), found in Listeria monocytogenes serotype 1/2a (strain 10403S).